The chain runs to 204 residues: Guanylate kinase (204 aa).

Residues 18 to 196 form the Guanylate kinase-like domain; the sequence is PKLFTISAPA…SYEVLKSIFI (179 aa). 25–32 is an ATP binding site; it reads APAGAGKT.

It belongs to the guanylate kinase family.

It is found in the cytoplasm. The enzyme catalyses GMP + ATP = GDP + ADP. Essential for recycling GMP and indirectly, cGMP. The chain is Guanylate kinase from Chlamydia abortus (strain DSM 27085 / S26/3) (Chlamydophila abortus).